Reading from the N-terminus, the 337-residue chain is Phosphatidate cytidylyltransferase, mitochondrial (337 aa).

The protein belongs to the TAM41 family. The cofactor is Mg(2+).

Its subcellular location is the mitochondrion inner membrane. The enzyme catalyses a 1,2-diacyl-sn-glycero-3-phosphate + CTP + H(+) = a CDP-1,2-diacyl-sn-glycerol + diphosphate. The protein operates within phospholipid metabolism; CDP-diacylglycerol biosynthesis; CDP-diacylglycerol from sn-glycerol 3-phosphate: step 3/3. Its function is as follows. Catalyzes the conversion of phosphatidic acid (PA) to CDP-diacylglycerol (CDP-DAG), an essential intermediate in the synthesis of phosphatidylglycerol, cardiolipin and phosphatidylinositol. This is Phosphatidate cytidylyltransferase, mitochondrial (Tamm41) from Mus musculus (Mouse).